The sequence spans 581 residues: Mitosis inhibitor protein kinase mik1 (581 aa).

Disordered regions lie at residues 43 to 71 and 148 to 178; these read GHEE…HTPM and NLTN…PLSP. Residues 59-71 are compositionally biased toward polar residues; the sequence is KPSNTKRSPHTPM. Basic residues predominate over residues 160–169; the sequence is PCKKGTKIKL. A Protein kinase domain is found at 289 to 561; sequence FQQVKPIHES…LLAMPEMIFI (273 aa). ATP contacts are provided by residues 295 to 303 and K320; that span reads IHESDFSFV. D417 functions as the Proton acceptor in the catalytic mechanism. Mg(2+) contacts are provided by N422 and D435.

This sequence belongs to the protein kinase superfamily. Ser/Thr protein kinase family. WEE1 subfamily.

It carries out the reaction L-seryl-[protein] + ATP = O-phospho-L-seryl-[protein] + ADP + H(+). It catalyses the reaction L-threonyl-[protein] + ATP = O-phospho-L-threonyl-[protein] + ADP + H(+). Its function is as follows. Protein kinase that acts both on serines and on tyrosines. It acts as a negative regulator of entry into mitosis (G2 to M transition). Phosphorylates and inhibits cdc2. The sequence is that of Mitosis inhibitor protein kinase mik1 (mik1) from Schizosaccharomyces pombe (strain 972 / ATCC 24843) (Fission yeast).